The chain runs to 176 residues: Warthog protein 5 (176 aa).

The signal sequence occupies residues 1–21 (MCSMWLMASWLMAFVAGSTLA). A glycan (N-linked (GlcNAc...) asparagine) is linked at Asn-70.

As to expression, expressed in seam cells, excretory cell, reproductive system, pharynx, pharyngeal-intestinal valve cells, neurons and neuronal support cells.

Its subcellular location is the secreted. In terms of biological role, intercellular signal essential for a variety of patterning events during development. The protein is Warthog protein 5 (wrt-5) of Caenorhabditis elegans.